The chain runs to 636 residues: Translation factor GUF1, mitochondrial (636 aa).

One can recognise a tr-type G domain in the interval S35–R218. GTP is bound by residues A44–S51, D111–H115, and N165–D168.

Belongs to the TRAFAC class translation factor GTPase superfamily. Classic translation factor GTPase family. LepA subfamily.

It localises to the mitochondrion inner membrane. It carries out the reaction GTP + H2O = GDP + phosphate + H(+). In terms of biological role, promotes mitochondrial protein synthesis. May act as a fidelity factor of the translation reaction, by catalyzing a one-codon backward translocation of tRNAs on improperly translocated ribosomes. Binds to mitochondrial ribosomes in a GTP-dependent manner. This chain is Translation factor GUF1, mitochondrial, found in Debaryomyces hansenii (strain ATCC 36239 / CBS 767 / BCRC 21394 / JCM 1990 / NBRC 0083 / IGC 2968) (Yeast).